Reading from the N-terminus, the 1341-residue chain is WD repeat-containing protein 19 (1341 aa).

6 WD repeats span residues 11 to 51, 52 to 92, 95 to 134, 137 to 175, 273 to 311, and 317 to 356; these read SWLG…RSEI, SLPG…TSQL, GMRDQMSFLLWSKIGSFLAVGTIKGNLLIYNHQTSRKIPV, KHTKKITCGCWNSENLLALGGEDKMITVSNQEGDTIRQT, DHKDNLTSVALSQTLNKAATCGDNCIKIHDLTELRDMYA, and DENKGLGTLSWTDDGQLLALSTQRGSLHVFLTKLPILGDA. TPR repeat units follow at residues 736-769, 775-808, 840-873, 895-928, 951-984, and 1020-1053; these read AQDLYLASNCPVAALEMRRDLQHWDSALQLAKRL, PFISKEYAIQLEFTGDYVNALAHYEKGITGDNKE, RVLKRDCGAILENMKQFSEAAQLYEKGQYYDRAA, PKIHLQYAKAKEADGRYKEAVVAYENAKQWNSVI, LDGAKMVARFFLQLGDYGSAIQFLVLSKCNNEAF, and EKRHFQAGKFFLLCGQYSRALKHFLKCPSSEDNV.

As to quaternary structure, component of the IFT complex A (IFT-A) complex. IFT-A complex is divided into a core subcomplex composed of IFT122:IFT140:WDR19 which is associated with TULP3 and a peripheral subcomplex composed of IFT43:WDR35:TTC21B. Interacts (via C-terminal region) with IFT122 (via C-terminal region). Interacts with BBS1. Interacts with TTC25. Tissue-specific expression of isoforms. Expressed in the prostate, testis, epididymis, submaxillary and salivary glands. Expressed in ependymal cells lining brain ventricles (at protein level).

Its subcellular location is the cell projection. The protein resides in the cilium. The protein localises to the cytoplasm. It is found in the cytoskeleton. It localises to the cilium basal body. Its subcellular location is the photoreceptor outer segment. The protein resides in the flagellum. As component of the IFT complex A (IFT-A), a complex required for retrograde ciliary transport and entry into cilia of G protein-coupled receptors (GPCRs), it is involved in cilia function and/or assembly. Essential for functional IFT-A assembly and ciliary entry of GPCRs. Associates with the BBSome complex to mediate ciliary transport. The chain is WD repeat-containing protein 19 from Mus musculus (Mouse).